We begin with the raw amino-acid sequence, 193 residues long: 3-isopropylmalate dehydratase small subunit (193 aa).

It belongs to the LeuD family. LeuD type 1 subfamily. In terms of assembly, heterodimer of LeuC and LeuD.

It catalyses the reaction (2R,3S)-3-isopropylmalate = (2S)-2-isopropylmalate. It participates in amino-acid biosynthesis; L-leucine biosynthesis; L-leucine from 3-methyl-2-oxobutanoate: step 2/4. Its function is as follows. Catalyzes the isomerization between 2-isopropylmalate and 3-isopropylmalate, via the formation of 2-isopropylmaleate. The protein is 3-isopropylmalate dehydratase small subunit of Bacillus cytotoxicus (strain DSM 22905 / CIP 110041 / 391-98 / NVH 391-98).